The sequence spans 355 residues: Protein RecA (355 aa).

65–72 (GPESSGKT) contacts ATP.

This sequence belongs to the RecA family.

It localises to the cytoplasm. In terms of biological role, can catalyze the hydrolysis of ATP in the presence of single-stranded DNA, the ATP-dependent uptake of single-stranded DNA by duplex DNA, and the ATP-dependent hybridization of homologous single-stranded DNAs. It interacts with LexA causing its activation and leading to its autocatalytic cleavage. This chain is Protein RecA, found in Pseudomonas putida (Arthrobacter siderocapsulatus).